A 123-amino-acid chain; its full sequence is Ribosome-binding factor A (123 aa).

The protein belongs to the RbfA family. As to quaternary structure, monomer. Binds 30S ribosomal subunits, but not 50S ribosomal subunits or 70S ribosomes.

Its subcellular location is the cytoplasm. In terms of biological role, one of several proteins that assist in the late maturation steps of the functional core of the 30S ribosomal subunit. Associates with free 30S ribosomal subunits (but not with 30S subunits that are part of 70S ribosomes or polysomes). Required for efficient processing of 16S rRNA. May interact with the 5'-terminal helix region of 16S rRNA. This Magnetococcus marinus (strain ATCC BAA-1437 / JCM 17883 / MC-1) protein is Ribosome-binding factor A.